A 475-amino-acid polypeptide reads, in one-letter code: Sulfate adenylyltransferase subunit 1 (475 aa).

A tr-type G domain is found at 25 to 239 (KSLLRFLTCG…EVLETVEIQR (215 aa)). A G1 region spans residues 34–41 (GSVDDGKS). 34-41 (GSVDDGKS) provides a ligand contact to GTP. The G2 stretch occupies residues 92–96 (GITID). The tract at residues 113-116 (DTPG) is G3. Residues 113-117 (DTPGH) and 168-171 (NKMD) contribute to the GTP site. A G4 region spans residues 168-171 (NKMD). Positions 206–208 (SAL) are G5.

This sequence belongs to the TRAFAC class translation factor GTPase superfamily. Classic translation factor GTPase family. CysN/NodQ subfamily. As to quaternary structure, heterodimer composed of CysD, the smaller subunit, and CysN.

It catalyses the reaction sulfate + ATP + H(+) = adenosine 5'-phosphosulfate + diphosphate. It participates in sulfur metabolism; hydrogen sulfide biosynthesis; sulfite from sulfate: step 1/3. Its function is as follows. With CysD forms the ATP sulfurylase (ATPS) that catalyzes the adenylation of sulfate producing adenosine 5'-phosphosulfate (APS) and diphosphate, the first enzymatic step in sulfur assimilation pathway. APS synthesis involves the formation of a high-energy phosphoric-sulfuric acid anhydride bond driven by GTP hydrolysis by CysN coupled to ATP hydrolysis by CysD. The chain is Sulfate adenylyltransferase subunit 1 from Shigella sonnei (strain Ss046).